We begin with the raw amino-acid sequence, 77 residues long: uncharacterized protein (77 aa).

Basic and acidic residues-rich tracts occupy residues 1 to 24 (CPVAEEHFLVPAHEARGTQGEDQR) and 37 to 58 (EGPKLGEERPKPEAGALEERGP). The segment at 1–77 (CPVAEEHFLV…RHGPKRKPAK (77 aa)) is disordered. A compositionally biased stretch (basic residues) spans 66 to 77 (RPRHGPKRKPAK).

This is an uncharacterized protein from Macaca fascicularis (Crab-eating macaque).